The following is a 154-amino-acid chain: uncharacterized protein (154 aa).

A divalent metal cation-binding residues include H47, H127, and H131. Y150 is subject to Phosphotyrosine.

The protein belongs to the DinB family. As to quaternary structure, homodimer.

This is an uncharacterized protein from Bacillus subtilis (strain 168).